A 218-amino-acid polypeptide reads, in one-letter code: Phosphoribosylformylglycinamidine synthase subunit PurQ (218 aa).

The 217-residue stretch at 2-218 (RVGVIRFPGS…FFRGILKFRG (217 aa)) folds into the Glutamine amidotransferase type-1 domain. The Nucleophile role is filled by Cys85. Residues His192 and Glu194 contribute to the active site.

As to quaternary structure, part of the FGAM synthase complex composed of 1 PurL, 1 PurQ and 2 PurS subunits.

The protein resides in the cytoplasm. It catalyses the reaction N(2)-formyl-N(1)-(5-phospho-beta-D-ribosyl)glycinamide + L-glutamine + ATP + H2O = 2-formamido-N(1)-(5-O-phospho-beta-D-ribosyl)acetamidine + L-glutamate + ADP + phosphate + H(+). It carries out the reaction L-glutamine + H2O = L-glutamate + NH4(+). It functions in the pathway purine metabolism; IMP biosynthesis via de novo pathway; 5-amino-1-(5-phospho-D-ribosyl)imidazole from N(2)-formyl-N(1)-(5-phospho-D-ribosyl)glycinamide: step 1/2. Part of the phosphoribosylformylglycinamidine synthase complex involved in the purines biosynthetic pathway. Catalyzes the ATP-dependent conversion of formylglycinamide ribonucleotide (FGAR) and glutamine to yield formylglycinamidine ribonucleotide (FGAM) and glutamate. The FGAM synthase complex is composed of three subunits. PurQ produces an ammonia molecule by converting glutamine to glutamate. PurL transfers the ammonia molecule to FGAR to form FGAM in an ATP-dependent manner. PurS interacts with PurQ and PurL and is thought to assist in the transfer of the ammonia molecule from PurQ to PurL. This is Phosphoribosylformylglycinamidine synthase subunit PurQ from Methanothermobacter thermautotrophicus (strain ATCC 29096 / DSM 1053 / JCM 10044 / NBRC 100330 / Delta H) (Methanobacterium thermoautotrophicum).